The following is a 136-amino-acid chain: Large ribosomal subunit protein uL16 (136 aa).

This sequence belongs to the universal ribosomal protein uL16 family. As to quaternary structure, part of the 50S ribosomal subunit.

In terms of biological role, binds 23S rRNA and is also seen to make contacts with the A and possibly P site tRNAs. In Wigglesworthia glossinidia brevipalpis, this protein is Large ribosomal subunit protein uL16.